The primary structure comprises 1052 residues: Kinesin-like protein KIF11 (1052 aa).

Residues 17 to 358 enclose the Kinesin motor domain; the sequence is NIQVVVRCRP…LEYAHRAKNI (342 aa). Residue 104 to 111 coordinates ATP; sequence GQTGTGKT. The residue at position 145 (Lys145) is an N6-acetyllysine. The stretch at 364–478 forms a coiled coil; the sequence is VNQKLTKKAL…ETKLQLVKEE (115 aa). A Phosphothreonine modification is found at Thr457. Lys476 participates in a covalent cross-link: Glycyl lysine isopeptide (Lys-Gly) (interchain with G-Cter in SUMO2). Thr925 is subject to Phosphothreonine. Disordered regions lie at residues 950 to 1026 and 1033 to 1052; these read LQKK…LNPV and EASDLSISKSRLPLHTSINL. Positions 963–988 form a coiled coil; that stretch reads EASKETSQDMDEEREALEQCTEELVS. Residues 1016–1026 show a composition bias toward basic and acidic residues; sequence KDKENRGLNPV.

It belongs to the TRAFAC class myosin-kinesin ATPase superfamily. Kinesin family. BimC subfamily. As to quaternary structure, interacts with the thyroid hormone receptor in the presence of thyroid hormone. Component of a large chromatin remodeling complex, at least composed of MYSM1, PCAF, RBM10 and KIF11/TRIP5. Interacts with RARRES1 and AGBL2. Post-translationally, phosphorylated exclusively on serine during S phase, but on both serine and Thr-925 during mitosis, so controlling the association of KIF11 with the spindle apparatus (probably during early prophase).

It is found in the cytoplasm. Its subcellular location is the cytoskeleton. The protein resides in the spindle pole. In terms of biological role, motor protein required for establishing a bipolar spindle during mitosis. Required in non-mitotic cells for transport of secretory proteins from the Golgi complex to the cell surface. The chain is Kinesin-like protein KIF11 (Kif11) from Mus musculus (Mouse).